The chain runs to 277 residues: NH(3)-dependent NAD(+) synthetase (277 aa).

36-43 (GLSGGIDS) contributes to the ATP binding site. A Mg(2+)-binding site is contributed by Asp-42. Arg-118 contributes to the deamido-NAD(+) binding site. Thr-138 contacts ATP. Residue Glu-143 coordinates Mg(2+). ATP-binding residues include Lys-167 and Ser-189.

Belongs to the NAD synthetase family. As to quaternary structure, homodimer.

The catalysed reaction is deamido-NAD(+) + NH4(+) + ATP = AMP + diphosphate + NAD(+) + H(+). The protein operates within cofactor biosynthesis; NAD(+) biosynthesis; NAD(+) from deamido-NAD(+) (ammonia route): step 1/1. Catalyzes the ATP-dependent amidation of deamido-NAD to form NAD. Uses ammonia as a nitrogen source. This is NH(3)-dependent NAD(+) synthetase from Chlorobium phaeovibrioides (strain DSM 265 / 1930) (Prosthecochloris vibrioformis (strain DSM 265)).